Reading from the N-terminus, the 463-residue chain is MSLIATRFAPSPTGYLHIGGLRTAIFNYLFARANQGKFFLRIEDTDLSRNSIEAANAIIEAFKWVGLEYDGEILYQSKRFEIYKECIQKLLNEDKAYYCYMSKDELDALREKQKVRKETPRYDNRYRDFKGTPPKGIEPVVRIKIPQNELICFNDGIKGEVRVNTNELDDFIIARSDGTPTYNFVVTIDDALMGITDVIRGDDHLSNTPKQIVLYKALNFKIPNFFHVPMILNEEGQKLSKRHGATNVMDYQEMGYLKEALINFLARLGWSYRDKEIFSMQELLELFDPKDLNSSPSCFSWHKLNWLNAHYLKTQSTQELLKLLKPFNFSDLSHLNPTQLDRLFDALKERSQTLKELALKIDEVLIAPIEYEEKVLKKLDQVLVTPLLEKFKLELNQADFNDENALENAIHKIIEEEKIKVGSFMQPLRLALLGKGGGIGLKEVLFILGKTESIKRIEKFLKN.

Positions 10–20 (PSPTGYLHIGG) match the 'HIGH' region motif. The 'KMSKS' region signature appears at 238–242 (KLSKR). K241 serves as a coordination point for ATP.

This sequence belongs to the class-I aminoacyl-tRNA synthetase family. Glutamate--tRNA ligase type 1 subfamily. In terms of assembly, monomer.

It localises to the cytoplasm. It catalyses the reaction tRNA(Glu) + L-glutamate + ATP = L-glutamyl-tRNA(Glu) + AMP + diphosphate. Functionally, catalyzes the attachment of glutamate to tRNA(Glu) in a two-step reaction: glutamate is first activated by ATP to form Glu-AMP and then transferred to the acceptor end of tRNA(Glu). This chain is Glutamate--tRNA ligase 2, found in Helicobacter acinonychis (strain Sheeba).